Reading from the N-terminus, the 550-residue chain is MAKEVKFGRTAREKMLRGVDILADAVKVTLGPKGRNVVIEKSFGSPRTTKDGVTVAKEIELEDKFENMGAQMVKEVASKTNDTAGDGTTTATVLTQAIVREGAKSVAAGMNPMDLKRGIEIAVRTAVEDITKRSKKVKSNDEVAQVGTISANGESEIGAMIAQAMSRVGNEGVITVEEAKSLDTELDVVEGMQFDRGYLSPYFITNADKMVVELDEPLILLHEKKLTSLQPMLPVLEAVVQSGRPLLIIAEDIEGEALATLVVNKLRGGLKVAAVKAPGFGDRRKAMLEDLAVLSGGQVISEDLGIKLESVTLDMLGKAKRVSITKDDTTIVDGAGKKKDIEARVAQIKRQIEDTTSDYDKEKLQERLAKLAGGVAVIKVGGATEAEVKERKDRVDDALNATRAAVEEGIVPGGGTALLMASKAVGKLVEDNRDIQAGINIIRRALEAPIRQIVENAGVEGSIVVQKVLESKQANFGFDAQKEEYCDLVAAGIIDPTKVVRTALQDAASIAGLLITTEAMIADAPKKDNGAAAGMPGGMGGMGGMGGMDF.

Residues 29-32, Lys50, 86-90, Gly414, and Asp495 contribute to the ATP site; these read TLGP and DGTTT.

The protein belongs to the chaperonin (HSP60) family. In terms of assembly, forms a cylinder of 14 subunits composed of two heptameric rings stacked back-to-back. Interacts with the co-chaperonin GroES.

It is found in the cytoplasm. It carries out the reaction ATP + H2O + a folded polypeptide = ADP + phosphate + an unfolded polypeptide.. Together with its co-chaperonin GroES, plays an essential role in assisting protein folding. The GroEL-GroES system forms a nano-cage that allows encapsulation of the non-native substrate proteins and provides a physical environment optimized to promote and accelerate protein folding. In Parvibaculum lavamentivorans (strain DS-1 / DSM 13023 / NCIMB 13966), this protein is Chaperonin GroEL.